We begin with the raw amino-acid sequence, 130 residues long: Small ribosomal subunit protein uS9 (130 aa).

The protein belongs to the universal ribosomal protein uS9 family.

The polypeptide is Small ribosomal subunit protein uS9 (Thioalkalivibrio sulfidiphilus (strain HL-EbGR7)).